The sequence spans 183 residues: Globin-like protein 26 (183 aa).

Positions 1–25 (MGSSTSTPAPPPKKNKPEGRKADNQ) are disordered. Gly-2 carries the N-myristoyl glycine lipid modification. The short motif at 12–18 (PKKNKPE) is the Nuclear localization signal element. One can recognise a Globin domain in the interval 26–166 (ILNSYQKSIV…VVDQLRFGYS (141 aa)). Heme-binding residues include His-77 and His-109.

Belongs to the globin family. As to quaternary structure, homodimer. Occurs in an equilibrium of monomeric and dimeric forms in solution. As to expression, detected in the head mesodermal cell. In the tail region, detected in the stomatointestinal and anal depressor muscle cells.

Its subcellular location is the cytoplasm. The protein localises to the nucleus lamina. It localises to the cell membrane. Functionally, plays a role in electron transport. Utilizes the bis-histidyl hexacoordinated complex with iron to transfer electrons to cytochrome c and molecular oxygen. Plays a regulatory role in the periodicity of the defecation cycle under oxidative stress conditions. Not involved in imparting protection against general conditions of oxidative stress. May participate in redox reactions under anaerobic conditions. The chain is Globin-like protein 26 from Caenorhabditis elegans.